A 240-amino-acid polypeptide reads, in one-letter code: Ribonuclease P protein component (240 aa).

A disordered region spans residues 1 to 140 (MDEKDLATQQ…KKAGGKGLVS (140 aa)). A compositionally biased stretch (pro residues) spans 40-51 (APPPHRVIPPHP). Residues 47 to 123 (IPPHPGLRQD…PGPDRDGGSK (77 aa)) are insert. Residues 122-132 (SKASRASSPKK) are compositionally biased toward low complexity.

The protein belongs to the RnpA family. As to quaternary structure, consists of a catalytic RNA component (M1 or rnpB) and a protein subunit.

It catalyses the reaction Endonucleolytic cleavage of RNA, removing 5'-extranucleotides from tRNA precursor.. Functionally, RNaseP catalyzes the removal of the 5'-leader sequence from pre-tRNA to produce the mature 5'-terminus. It can also cleave other RNA substrates such as 4.5S RNA. The protein component plays an auxiliary but essential role in vivo by binding to the 5'-leader sequence and broadening the substrate specificity of the ribozyme. The polypeptide is Ribonuclease P protein component (Thermus filiformis).